The sequence spans 511 residues: Trafficking protein particle complex subunit 13 homolog (511 aa).

It belongs to the TRAPPC13 family.

This Dictyostelium discoideum (Social amoeba) protein is Trafficking protein particle complex subunit 13 homolog.